Reading from the N-terminus, the 574-residue chain is Membrane protein insertase YidC (574 aa).

The chain crosses the membrane as a helical span at residues 6–26; it reads VFLIFAWLMVAALLWMEWGKD. The disordered stretch occupies residues 45–77; that stretch reads RDPDAAAPSAANVPSAQPIPQAGAPGTVPATSS. Helical transmembrane passes span 356–376, 380–400, 447–467, 489–509, and 525–545; these read FSIM…LHSF, WGWA…PLSA, GGCL…WVLV, PYFI…KLTP, and PLVF…YWVV.

It belongs to the OXA1/ALB3/YidC family. Type 1 subfamily. In terms of assembly, interacts with the Sec translocase complex via SecD. Specifically interacts with transmembrane segments of nascent integral membrane proteins during membrane integration.

The protein localises to the cell inner membrane. Required for the insertion and/or proper folding and/or complex formation of integral membrane proteins into the membrane. Involved in integration of membrane proteins that insert both dependently and independently of the Sec translocase complex, as well as at least some lipoproteins. Aids folding of multispanning membrane proteins. This is Membrane protein insertase YidC from Xanthomonas euvesicatoria pv. vesicatoria (strain 85-10) (Xanthomonas campestris pv. vesicatoria).